The sequence spans 270 residues: Phosphatidylglycerol--prolipoprotein diacylglyceryl transferase (270 aa).

Helical transmembrane passes span 10 to 30, 56 to 76, 92 to 112, 120 to 140, 175 to 195, 202 to 222, and 237 to 257; these read VAVAIGPLQIHWYGLMYLVGI, LIFWLAMGVIVGGRLGYVLFY, WKGGMAFHGGFVGVMIAAWWF, FFQLMDFVAPLVPIGLGAGRI, SQLYQFALEGVALFIILNLYA, MAVSGMFALFYGIFRFVVEFV, and VTMGQILSLPMIIAGLLLIWL. Residue Arg139 coordinates a 1,2-diacyl-sn-glycero-3-phospho-(1'-sn-glycerol).

The protein belongs to the Lgt family.

It is found in the cell inner membrane. The enzyme catalyses L-cysteinyl-[prolipoprotein] + a 1,2-diacyl-sn-glycero-3-phospho-(1'-sn-glycerol) = an S-1,2-diacyl-sn-glyceryl-L-cysteinyl-[prolipoprotein] + sn-glycerol 1-phosphate + H(+). Its pathway is protein modification; lipoprotein biosynthesis (diacylglyceryl transfer). Functionally, catalyzes the transfer of the diacylglyceryl group from phosphatidylglycerol to the sulfhydryl group of the N-terminal cysteine of a prolipoprotein, the first step in the formation of mature lipoproteins. This Pseudomonas syringae pv. syringae (strain B728a) protein is Phosphatidylglycerol--prolipoprotein diacylglyceryl transferase.